A 28-amino-acid polypeptide reads, in one-letter code: GLGSLLGKAFKIGLKTVGKMMGGAPREQ.

The protein belongs to the gastrin/cholecystokinin family. In terms of tissue distribution, expressed by the skin glands.

It localises to the secreted. Its function is as follows. Peptide CPF-B1: Has antimicrobial activity against Gram-negative bacteria E.coli ATCC 25922 (MIC=5 uM) and multidrug-resistant A.baumannii (MIC=4-8 uM), against Gram-positive bacteria S.aureus ATCC 25923 (MIC=5 uM) and methicillin-resistant S.aureus and against fungus C.albicans ATCC 90028 (MIC=25 uM). Has some hemolytic activity against human erythrocytes at high concentrations. This is Caerulein precursor fragment B1 from Xenopus borealis (Kenyan clawed frog).